The chain runs to 423 residues: UPF0229 protein VP0986 (423 aa).

A disordered region spans residues 69-112; it reads GGVRERVHPGNDQFITGDKIERPKGGGQGSGSGEGNASPDGEGQ. Positions 93–102 are enriched in gly residues; the sequence is GGGQGSGSGE.

This sequence belongs to the UPF0229 family.

The chain is UPF0229 protein VP0986 from Vibrio parahaemolyticus serotype O3:K6 (strain RIMD 2210633).